Reading from the N-terminus, the 232-residue chain is Cytidylate kinase (232 aa).

An ATP-binding site is contributed by 10–18 (GPAASGKST).

It belongs to the cytidylate kinase family. Type 1 subfamily.

It localises to the cytoplasm. The catalysed reaction is CMP + ATP = CDP + ADP. The enzyme catalyses dCMP + ATP = dCDP + ADP. The protein is Cytidylate kinase of Phytoplasma mali (strain AT).